A 181-amino-acid polypeptide reads, in one-letter code: Large ribosomal subunit protein uL16 (181 aa).

Belongs to the universal ribosomal protein uL16 family.

In Pyrococcus abyssi (strain GE5 / Orsay), this protein is Large ribosomal subunit protein uL16.